A 545-amino-acid polypeptide reads, in one-letter code: Chaperonin GroEL (545 aa).

Residues threonine 29–proline 32, lysine 50, aspartate 86–threonine 90, glycine 415, and aspartate 495 each bind ATP.

Belongs to the chaperonin (HSP60) family. Forms a cylinder of 14 subunits composed of two heptameric rings stacked back-to-back. Interacts with the co-chaperonin GroES.

Its subcellular location is the cytoplasm. The catalysed reaction is ATP + H2O + a folded polypeptide = ADP + phosphate + an unfolded polypeptide.. Its function is as follows. Together with its co-chaperonin GroES, plays an essential role in assisting protein folding. The GroEL-GroES system forms a nano-cage that allows encapsulation of the non-native substrate proteins and provides a physical environment optimized to promote and accelerate protein folding. This is Chaperonin GroEL from Bacteroides fragilis (strain ATCC 25285 / DSM 2151 / CCUG 4856 / JCM 11019 / LMG 10263 / NCTC 9343 / Onslow / VPI 2553 / EN-2).